The chain runs to 61 residues: UPF0312 protein (61 aa).

It belongs to the UPF0312 family.

The protein is UPF0312 protein of Delftia acidovorans (Pseudomonas acidovorans).